Here is a 287-residue protein sequence, read N- to C-terminus: tRNA selenocysteine 1-associated protein 1 (287 aa).

RRM domains follow at residues 3-86 and 96-175; these read ASLW…YATY and YSLF…VAIP.

Belongs to the RRM TRSPAP family. As to quaternary structure, component of the tRNA(Sec) complex composed at least of EEFSEC, SECISBP2, SEPHS1, SEPSECS, TRNAU1AP and tRNA(Sec). Associates with mRNP and/or polysomes. Found in a complex with tRNA(Sec). Interacts with SEPSECS. As to expression, ubiquitous.

It is found in the nucleus. It localises to the cytoplasm. Functionally, involved in the early steps of selenocysteine biosynthesis and tRNA(Sec) charging to the later steps resulting in the cotranslational incorporation of selenocysteine into selenoproteins. Stabilizes the SECISBP2, EEFSEC and tRNA(Sec) complex. May be involved in the methylation of tRNA(Sec). Enhances efficiency of selenoproteins synthesis. This is tRNA selenocysteine 1-associated protein 1 (Trnau1ap) from Rattus norvegicus (Rat).